We begin with the raw amino-acid sequence, 373 residues long: 3-dehydroquinate synthase (373 aa).

Residues 120 to 124 (GVVGD), 144 to 145 (TT), lysine 157, lysine 166, and 184 to 187 (FLKT) contribute to the NAD(+) site. Zn(2+) is bound by residues glutamate 199, histidine 262, and histidine 278.

Belongs to the sugar phosphate cyclases superfamily. Dehydroquinate synthase family. Requires NAD(+) as cofactor. It depends on Co(2+) as a cofactor. Zn(2+) serves as cofactor.

It localises to the cytoplasm. The enzyme catalyses 7-phospho-2-dehydro-3-deoxy-D-arabino-heptonate = 3-dehydroquinate + phosphate. It participates in metabolic intermediate biosynthesis; chorismate biosynthesis; chorismate from D-erythrose 4-phosphate and phosphoenolpyruvate: step 2/7. In terms of biological role, catalyzes the conversion of 3-deoxy-D-arabino-heptulosonate 7-phosphate (DAHP) to dehydroquinate (DHQ). This is 3-dehydroquinate synthase from Clostridium tetani (strain Massachusetts / E88).